A 581-amino-acid polypeptide reads, in one-letter code: Estrogen receptor (581 aa).

A modulating region spans residues 1 to 144 (MYPEDSRVSG…GFEMAKEMRF (144 aa)). Disordered stretches follow at residues 45 to 66 (APLDAHGPPSDGSLQSLGSGPN) and 99 to 123 (RSSVPSSQHSVSREDQCGTSDDSYS). A compositionally biased stretch (polar residues) spans 56–66 (GSLQSLGSGPN). A DNA-binding region (nuclear receptor) is located at residues 142-217 (MRFCAVCSDY…VGMMKGGVRK (76 aa)). NR C4-type zinc fingers lie at residues 145 to 165 (CAVCSDYASGYHYGVWSCEGC) and 181 to 200 (CPATNQCTIDRNRRKSCQAC). A hinge region spans residues 211 to 272 (MKGGVRKDRG…GGGKSSVISM (62 aa)). The segment covering 216–246 (RKDRGRVLRRDKRRTGTSDRDKASKGLEHRT) has biased composition (basic and acidic residues). Residues 216-269 (RKDRGRVLRRDKRRTGTSDRDKASKGLEHRTAPPQDRRKHISSSAGGGGGKSSV) are disordered. Residues 273 to 509 (PPDQVLLLLR…DLLLEMLDAH (237 aa)) enclose the NR LBD domain. Basic and acidic residues predominate over residues 514–528 (PDRPAETWSQADREP). Residues 514 to 581 (PDRPAETWSQ…VHPHPMKPTE (68 aa)) form a disordered region. Residues 572-581 (VHPHPMKPTE) show a composition bias toward basic residues.

It belongs to the nuclear hormone receptor family. NR3 subfamily. In terms of assembly, binds DNA as a homodimer. Can form a heterodimer with ER-beta.

The protein localises to the nucleus. The steroid hormones and their receptors are involved in the regulation of eukaryotic gene expression and affect cellular proliferation and differentiation in target tissues. This chain is Estrogen receptor (esr1), found in Sparus aurata (Gilthead sea bream).